The sequence spans 221 residues: Potassium voltage-gated channel subfamily E member 4 (221 aa).

Over 1–86 (MHFLTIYPNC…AGGGSGNGNE (86 aa)) the chain is Extracellular. The N-linked (GlcNAc...) asparagine glycan is linked to Asn-9. Over residues 58-72 (LNSTHPGTAASSSPL) the composition is skewed to polar residues. Residues 58–77 (LNSTHPGTAASSSPLESRAA) are disordered. The chain crosses the membrane as a helical span at residues 87-107 (YFYILVVMSFYGIFLIGIMLG). Residues 108 to 221 (YMKSKRREKK…GSSENIHQNS (114 aa)) lie on the Cytoplasmic side of the membrane. The segment at 175–221 (SVSSESSSPDVHLTIQEEGADDELEETSETPLNESSEGSSENIHQNS) is disordered. A compositionally biased stretch (acidic residues) spans 192–202 (EGADDELEETS). The span at 203–221 (ETPLNESSEGSSENIHQNS) shows a compositional bias: polar residues.

It belongs to the potassium channel KCNE family. As to quaternary structure, forms heterooligomers with KCNA3, inhibiting its activity by impairing localization to the cell membrane. The stoichiometry of KCNA3 and KCNE4 in the heterooligomers are 4:1, 4:2, 4:3 or 4:4 respectively. Increasing the number of KCNE4 subunits steadily slows the activation KCNA3 and decreases its abundance at the cell membrane. However, a single subunit of KCNE4 is sufficient for the cooperative enhancement of the inactivating function of the channel. However, a single subunit of KCNE4 is sufficient for the cooperative enhancement of the inactivating function of the channel. Interacts with KCNQ1; impairs KCNQ1 localization in lipid rafts and inhibits voltage-gated potassium channel activity. Predominantly expressed in embryo and adult uterus. Low expression found in kidney, small intestine, lung and heart. In terms of tissue distribution, detected in kidney, thymus, and uterus (at protein level).

The protein resides in the membrane. Its function is as follows. Ancillary protein that functions as a regulatory subunit of the voltage-gated potassium (Kv) channel complex composed of pore-forming and potassium-conducting alpha subunits and of regulatory beta subunits. KCNE4 beta subunit modulates the gating kinetics and enhances stability of the channel complex. Associates with KCNQ1/KVLTQ1 alpha subunit to inhibit potassium currents. Functionally, may inhibit KCNQ4-mediated potassium currents. This is Potassium voltage-gated channel subfamily E member 4 from Homo sapiens (Human).